The sequence spans 460 residues: 3-isopropylmalate dehydratase large subunit (460 aa).

The [4Fe-4S] cluster site is built by Cys338, Cys398, and Cys401.

It belongs to the aconitase/IPM isomerase family. LeuC type 1 subfamily. In terms of assembly, heterodimer of LeuC and LeuD. Requires [4Fe-4S] cluster as cofactor.

It carries out the reaction (2R,3S)-3-isopropylmalate = (2S)-2-isopropylmalate. It participates in amino-acid biosynthesis; L-leucine biosynthesis; L-leucine from 3-methyl-2-oxobutanoate: step 2/4. Its function is as follows. Catalyzes the isomerization between 2-isopropylmalate and 3-isopropylmalate, via the formation of 2-isopropylmaleate. In Streptococcus thermophilus (strain ATCC BAA-250 / LMG 18311), this protein is 3-isopropylmalate dehydratase large subunit.